Consider the following 434-residue polypeptide: 3-phosphoshikimate 1-carboxyvinyltransferase (434 aa).

Positions 22, 23, and 27 each coordinate 3-phosphoshikimate. Phosphoenolpyruvate is bound at residue K22. Residues G93 and R121 each coordinate phosphoenolpyruvate. 3-phosphoshikimate-binding residues include S168, S169, Q170, S199, D320, and K347. Q170 serves as a coordination point for phosphoenolpyruvate. D320 acts as the Proton acceptor in catalysis. R351, R395, and K420 together coordinate phosphoenolpyruvate.

The protein belongs to the EPSP synthase family. Monomer.

The protein localises to the cytoplasm. It catalyses the reaction 3-phosphoshikimate + phosphoenolpyruvate = 5-O-(1-carboxyvinyl)-3-phosphoshikimate + phosphate. The protein operates within metabolic intermediate biosynthesis; chorismate biosynthesis; chorismate from D-erythrose 4-phosphate and phosphoenolpyruvate: step 6/7. Functionally, catalyzes the transfer of the enolpyruvyl moiety of phosphoenolpyruvate (PEP) to the 5-hydroxyl of shikimate-3-phosphate (S3P) to produce enolpyruvyl shikimate-3-phosphate and inorganic phosphate. The protein is 3-phosphoshikimate 1-carboxyvinyltransferase of Cupriavidus taiwanensis (strain DSM 17343 / BCRC 17206 / CCUG 44338 / CIP 107171 / LMG 19424 / R1) (Ralstonia taiwanensis (strain LMG 19424)).